We begin with the raw amino-acid sequence, 354 residues long: G protein alpha o subunit (354 aa).

A lipid anchor (N-myristoyl glycine) is attached at G2. The S-palmitoyl cysteine moiety is linked to residue C3. One can recognise a G-alpha domain in the interval 32 to 354; it reads KDIKLLLLGA…ANNLRGCGLY (323 aa). The segment at 35–48 is G1 motif; it reads KLLLLGAGESGKST. Residues 40–47, 176–182, 201–205, 270–273, and A326 each bind GTP; these read GAGESGKS, LRTRVKT, DVGGQ, and NKKD. S47 and T182 together coordinate Mg(2+). The interval 174 to 182 is G2 motif; sequence DILRTRVKT. The segment at 197-206 is G3 motif; sequence FKLFDVGGQR. A G4 motif region spans residues 266–273; the sequence is ILFLNKKD. Positions 324–329 are G5 motif; sequence TCATDT.

It belongs to the G-alpha family. G(i/o/t/z) subfamily. As to quaternary structure, g proteins are composed of 3 units; alpha, beta and gamma. The alpha chain contains the guanine nucleotide binding site. In terms of tissue distribution, expressed primarily in neuronal cell bodies in the brain, optic lobe, and thoracic and abdominal ganglia. Also expressed in antenna, oocytes and ovarian nurse cells.

Its function is as follows. Guanine nucleotide-binding proteins (G proteins) are involved as modulators or transducers in various transmembrane signaling systems. Plays a role in glial cell differentiation during embryogenesis; loco, Galphai and the G-protein coupled receptor, moody, are required in the surface glia to achieve effective insulation of the nerve cord. The protein is G protein alpha o subunit (Galphao) of Drosophila melanogaster (Fruit fly).